A 381-amino-acid chain; its full sequence is Alcohol dehydrogenase-like 6 (381 aa).

Zn(2+)-binding residues include cysteine 53, serine 55, histidine 72, cysteine 102, cysteine 105, cysteine 108, cysteine 116, and cysteine 179. Serine 55 and histidine 72 together coordinate an alcohol. Serine 55 is a binding site for NAD(+). NAD(+) is bound by residues 204-209 (GLGTVG), aspartate 228, lysine 233, 297-299 (LGV), phenylalanine 324, and arginine 374.

The protein belongs to the zinc-containing alcohol dehydrogenase family. Class-III subfamily. As to quaternary structure, homodimer. Requires Zn(2+) as cofactor.

It localises to the cytoplasm. The enzyme catalyses a primary alcohol + NAD(+) = an aldehyde + NADH + H(+). It carries out the reaction a secondary alcohol + NAD(+) = a ketone + NADH + H(+). The chain is Alcohol dehydrogenase-like 6 from Arabidopsis thaliana (Mouse-ear cress).